The sequence spans 295 residues: Pyridoxal 5'-phosphate synthase subunit PdxS (295 aa).

Asp-25 is a binding site for D-ribose 5-phosphate. The Schiff-base intermediate with D-ribose 5-phosphate role is filled by Lys-82. Position 154 (Gly-154) interacts with D-ribose 5-phosphate. Arg-166 is a binding site for D-glyceraldehyde 3-phosphate. D-ribose 5-phosphate contacts are provided by residues Gly-215 and 236–237; that span reads GS.

This sequence belongs to the PdxS/SNZ family. As to quaternary structure, in the presence of PdxT, forms a dodecamer of heterodimers.

The enzyme catalyses aldehydo-D-ribose 5-phosphate + D-glyceraldehyde 3-phosphate + L-glutamine = pyridoxal 5'-phosphate + L-glutamate + phosphate + 3 H2O + H(+). It functions in the pathway cofactor biosynthesis; pyridoxal 5'-phosphate biosynthesis. Its function is as follows. Catalyzes the formation of pyridoxal 5'-phosphate from ribose 5-phosphate (RBP), glyceraldehyde 3-phosphate (G3P) and ammonia. The ammonia is provided by the PdxT subunit. Can also use ribulose 5-phosphate and dihydroxyacetone phosphate as substrates, resulting from enzyme-catalyzed isomerization of RBP and G3P, respectively. This is Pyridoxal 5'-phosphate synthase subunit PdxS from Shouchella clausii (strain KSM-K16) (Alkalihalobacillus clausii).